We begin with the raw amino-acid sequence, 582 residues long: Hemagglutinin-neuraminidase (582 aa).

Residues methionine 1–arginine 34 are Intravirion-facing. Residues isoleucine 35–leucine 55 traverse the membrane as a helical segment. The Virion surface segment spans residues valine 56–threonine 582. 3 disulfide bridges follow: cysteine 178-cysteine 202, cysteine 192-cysteine 253, and cysteine 244-cysteine 257. Asparagine 284 and asparagine 329 each carry an N-linked (GlcNAc...) asparagine; by host glycan. 3 cysteine pairs are disulfide-bonded: cysteine 350–cysteine 471, cysteine 382–cysteine 392, and cysteine 465–cysteine 475. N-linked (GlcNAc...) asparagine; by host glycosylation is found at asparagine 400 and asparagine 448. Residue asparagine 507 is glycosylated (N-linked (GlcNAc...) asparagine; by host). A disulfide bond links cysteine 545 and cysteine 556.

Belongs to the paramyxoviruses hemagglutinin-neuraminidase family. In terms of assembly, homotetramer; composed of disulfide-linked homodimers. Interacts with F protein trimer.

Its subcellular location is the virion membrane. It is found in the host cell membrane. It carries out the reaction Hydrolysis of alpha-(2-&gt;3)-, alpha-(2-&gt;6)-, alpha-(2-&gt;8)- glycosidic linkages of terminal sialic acid residues in oligosaccharides, glycoproteins, glycolipids, colominic acid and synthetic substrates.. Functionally, attaches the virus to alpha-2,3-linked sialic acid-containing cell receptors and thereby initiating infection. Binding of HN protein to the receptor induces a conformational change that allows the F protein to trigger virion/cell membranes fusion. Binds to the glycan motifs sialyl Lewis (SLe) and GM2 ganglioside (GM2-glycan). In terms of biological role, neuraminidase activity ensures the efficient spread of the virus by dissociating the mature virions from the neuraminic acid containing glycoproteins. The chain is Hemagglutinin-neuraminidase from Mumps orthorubulavirus (MuV).